A 203-amino-acid chain; its full sequence is Small ribosomal subunit protein uS4c (203 aa).

Residues 17–39 (TLPGLTTKKSNKLNRPGKDGNTD) form a disordered region. In terms of domain architecture, S4 RNA-binding spans 92–164 (MRLDTLCFTL…IKNNQVREIP (73 aa)).

This sequence belongs to the universal ribosomal protein uS4 family. Part of the 30S ribosomal subunit. Contacts protein S5. The interaction surface between S4 and S5 is involved in control of translational fidelity.

It is found in the plastid. The protein localises to the chloroplast. Its function is as follows. One of the primary rRNA binding proteins, it binds directly to 16S rRNA where it nucleates assembly of the body of the 30S subunit. In terms of biological role, with S5 and S12 plays an important role in translational accuracy. This is Small ribosomal subunit protein uS4c (rps4) from Phaeodactylum tricornutum (strain CCAP 1055/1).